The chain runs to 104 residues: Nucleoid-associated protein GAU_1113 (104 aa).

This sequence belongs to the YbaB/EbfC family. As to quaternary structure, homodimer.

The protein resides in the cytoplasm. Its subcellular location is the nucleoid. In terms of biological role, binds to DNA and alters its conformation. May be involved in regulation of gene expression, nucleoid organization and DNA protection. In Gemmatimonas aurantiaca (strain DSM 14586 / JCM 11422 / NBRC 100505 / T-27), this protein is Nucleoid-associated protein GAU_1113.